The sequence spans 365 residues: Prostaglandin E2 receptor EP3 subtype (365 aa).

The Extracellular portion of the chain corresponds to 1–30; the sequence is MAGVWAPEHSVEAHSNQSSAADGCGSVSVA. N-linked (GlcNAc...) asparagine glycosylation is present at asparagine 16. Residues 31–55 traverse the membrane as a helical segment; the sequence is FPITMMVTGFVGNALAMLLVVRSYR. At 56 to 68 the chain is on the cytoplasmic side; the sequence is RRESKRKKSFLLC. A helical membrane pass occupies residues 69 to 89; it reads IGWLALTDLVGQLLTSPVVIL. Residues 90–108 lie on the Extracellular side of the membrane; that stretch reads VYLSQRRWEQLDPSGRLCT. Cysteine 107 and cysteine 184 are joined by a disulfide. The helical transmembrane segment at 109–130 threads the bilayer; it reads FFGLTMTVFGLSSLLVASAMAV. Over 131–151 the chain is Cytoplasmic; that stretch reads ERALAIRAPHWYASHMKTRAT. The helical transmembrane segment at 152-173 threads the bilayer; the sequence is PVLLGVWLSVLAFALLPVLGVG. Topologically, residues 174 to 203 are extracellular; that stretch reads RYSVQWPGTWCFISTGPAGNETDSAREPGS. Asparagine 193 is a glycosylation site (N-linked (GlcNAc...) asparagine). Residues 204 to 229 traverse the membrane as a helical segment; the sequence is VAFASAFACLGLLALVVTFACNLATI. Over 230 to 259 the chain is Cytoplasmic; that stretch reads KALVSRCRAKAAASQSSAQWGRITTETAIQ. A helical membrane pass occupies residues 260–283; it reads LMGIMCVLSVCWSPLLIMMLKMIF. At 284–303 the chain is on the extracellular side; sequence NQMSVEQCKTQMGKEKECNS. The helical transmembrane segment at 304 to 325 threads the bilayer; it reads FLIAVRLASLNQILDPWVYLLL. Residues 326–365 lie on the Cytoplasmic side of the membrane; it reads RKILLRKFCQIRDHTNYASSSTSLPCPGSSVLMWSDQLER.

Belongs to the G-protein coupled receptor 1 family. As to quaternary structure, interacts (via C-terminus) with MKLN1. Does not interact with MKLN1. As to expression, principally expressed in the tubules of the renal medulla. Specific expression is seen in medullary and cortical thick ascending limbs; lower levels are detected in cortical and inner medullary collecting ducts. Not detected significantly in the glomeruli. In the brain, expressed in all types of glial cells.

The protein localises to the cell membrane. In terms of biological role, receptor for prostaglandin E2 (PGE2). Required for normal development of fever in response to pyrinogens, including IL1B, prostaglandin E2 and bacterial lipopolysaccharide (LPS). Required for normal potentiation of platelet aggregation by prostaglandin E2, and thus plays a role in the regulation of blood coagulation. Required for increased HCO3(-) secretion in the duodenum in response to mucosal acidification, and thereby contributes to the protection of the mucosa against acid-induced ulceration. Not required for normal kidney function, normal urine volume and osmolality. Functionally, receptor for prostaglandin E2 (PGE2); ligand binding activates a signaling cascade via G(i) proteins that leads to the inhibition of adenylate cyclase. Its function is as follows. Receptor for prostaglandin E2 (PGE2); ligand binding can activate several distinct signaling cascades, resulting in activation or inhibition of adenylate cyclase. The sequence is that of Prostaglandin E2 receptor EP3 subtype (Ptger3) from Rattus norvegicus (Rat).